A 580-amino-acid chain; its full sequence is Netrin-3 (580 aa).

Positions Met-1–Ala-27 are cleaved as a signal peptide. One can recognise a Laminin N-terminal domain in the interval Ala-36–Arg-254. Residues Pro-62–Ser-83 form a disordered region. 15 disulfides stabilise this stretch: Cys-92–Cys-125, Cys-255–Cys-264, Cys-257–Cys-274, Cys-276–Cys-285, Cys-288–Cys-308, Cys-311–Cys-320, Cys-313–Cys-338, Cys-341–Cys-350, Cys-353–Cys-371, Cys-374–Cys-386, Cys-376–Cys-393, Cys-395–Cys-404, Cys-407–Cys-421, Cys-441–Cys-514, and Cys-460–Cys-577. A glycan (N-linked (GlcNAc...) asparagine) is linked at Asn-104. Laminin EGF-like domains lie at Cys-255–Cys-308, Cys-311–Cys-371, and Cys-374–Cys-421. Asn-387 carries N-linked (GlcNAc...) asparagine glycosylation. The NTR domain occupies Cys-441 to Cys-577. Residues Arg-500 to Ser-502 carry the Cell attachment site; atypical motif.

In terms of tissue distribution, spinal cord.

Its subcellular location is the secreted. It localises to the extracellular space. The protein resides in the extracellular matrix. Netrins control guidance of CNS commissural axons and peripheral motor axons. This chain is Netrin-3 (NTN3), found in Homo sapiens (Human).